We begin with the raw amino-acid sequence, 156 residues long: MSSNKINKKSIARIAAVQAIYQNILQNNDDMDDIMQNVLSFYQNNNSTTALPENLKISLSISHFKMLVKSVFENINKLDEIIDNHLTNDKDPAHMPILLRALLRVSICELLFCPTTPAKVVINEYTDIANDMLNEHEIGFVNSILDKIAQENNKIS.

It belongs to the NusB family.

Involved in transcription antitermination. Required for transcription of ribosomal RNA (rRNA) genes. Binds specifically to the boxA antiterminator sequence of the ribosomal RNA (rrn) operons. The chain is Transcription antitermination protein NusB from Rickettsia felis (strain ATCC VR-1525 / URRWXCal2) (Rickettsia azadi).